A 69-amino-acid polypeptide reads, in one-letter code: Cell division protein ZapB (69 aa).

A coiled-coil region spans residues 3 to 60 (LELFNQLEQKVQNAVETIEMLKMEAEELREENTRLKQERDEWERRLNGLLGKFQEIED).

The protein belongs to the ZapB family. Homodimer. The ends of the coiled-coil dimer bind to each other, forming polymers. Interacts with FtsZ.

Its subcellular location is the cytoplasm. In terms of biological role, non-essential, abundant cell division factor that is required for proper Z-ring formation. It is recruited early to the divisome by direct interaction with FtsZ, stimulating Z-ring assembly and thereby promoting cell division earlier in the cell cycle. Its recruitment to the Z-ring requires functional FtsA or ZipA. This Chromohalobacter salexigens (strain ATCC BAA-138 / DSM 3043 / CIP 106854 / NCIMB 13768 / 1H11) protein is Cell division protein ZapB.